The sequence spans 498 residues: Lysine--tRNA ligase (498 aa).

Residues glutamate 408 and glutamate 415 each contribute to the Mg(2+) site.

The protein belongs to the class-II aminoacyl-tRNA synthetase family. Homodimer. Requires Mg(2+) as cofactor.

The protein resides in the cytoplasm. The catalysed reaction is tRNA(Lys) + L-lysine + ATP = L-lysyl-tRNA(Lys) + AMP + diphosphate. The polypeptide is Lysine--tRNA ligase (Listeria monocytogenes serovar 1/2a (strain ATCC BAA-679 / EGD-e)).